Consider the following 357-residue polypeptide: Dual-specificity RNA methyltransferase RlmN (357 aa).

Glu89 functions as the Proton acceptor in the catalytic mechanism. Residues 109–340 (EGEKYTVCVS…CTIRESKALD (232 aa)) enclose the Radical SAM core domain. Cys116 and Cys345 are oxidised to a cystine. [4Fe-4S] cluster contacts are provided by Cys123, Cys127, and Cys130. S-adenosyl-L-methionine is bound by residues 173-174 (GE), Ser203, 226-228 (SLH), and Asn302. The active-site S-methylcysteine intermediate is Cys345.

This sequence belongs to the radical SAM superfamily. RlmN family. [4Fe-4S] cluster is required as a cofactor.

The protein localises to the cytoplasm. It carries out the reaction adenosine(2503) in 23S rRNA + 2 reduced [2Fe-2S]-[ferredoxin] + 2 S-adenosyl-L-methionine = 2-methyladenosine(2503) in 23S rRNA + 5'-deoxyadenosine + L-methionine + 2 oxidized [2Fe-2S]-[ferredoxin] + S-adenosyl-L-homocysteine. It catalyses the reaction adenosine(37) in tRNA + 2 reduced [2Fe-2S]-[ferredoxin] + 2 S-adenosyl-L-methionine = 2-methyladenosine(37) in tRNA + 5'-deoxyadenosine + L-methionine + 2 oxidized [2Fe-2S]-[ferredoxin] + S-adenosyl-L-homocysteine. Specifically methylates position 2 of adenine 2503 in 23S rRNA and position 2 of adenine 37 in tRNAs. m2A2503 modification seems to play a crucial role in the proofreading step occurring at the peptidyl transferase center and thus would serve to optimize ribosomal fidelity. The chain is Dual-specificity RNA methyltransferase RlmN from Helicobacter pylori (strain G27).